Reading from the N-terminus, the 535-residue chain is Probable deoxycholate-binding periplasmic protein YgiS (535 aa).

A signal peptide spans 1 to 20 (MYTRNLLWLVSLVSAAPLYA).

The protein belongs to the bacterial solute-binding protein 5 family.

It localises to the periplasm. Its function is as follows. Probably part of a deoxycholate transport system. Its expression in the presence of deoxycholate in a ygiS deletion mutant increases intracellular deoxycholate levels and decreases cell growth; higher expression in the presence of deoxycholate inhibits cell growth completely. Bile acid detergents such as deoxycholate are important for host defense against bacterial growth in the gall bladder and duodenum. In Escherichia coli (strain K12), this protein is Probable deoxycholate-binding periplasmic protein YgiS (ygiS).